Reading from the N-terminus, the 327-residue chain is Malate dehydrogenase (327 aa).

An NAD(+)-binding site is contributed by 11 to 17 (GAAGQIS). Substrate contacts are provided by Arg92 and Arg98. NAD(+)-binding positions include Asn105, Gln112, and 129–131 (VGN). Positions 131 and 162 each coordinate substrate. Catalysis depends on His187, which acts as the Proton acceptor.

It belongs to the LDH/MDH superfamily. MDH type 2 family.

It catalyses the reaction (S)-malate + NAD(+) = oxaloacetate + NADH + H(+). Catalyzes the reversible oxidation of malate to oxaloacetate. This Cellvibrio japonicus (strain Ueda107) (Pseudomonas fluorescens subsp. cellulosa) protein is Malate dehydrogenase.